A 540-amino-acid chain; its full sequence is DEAD-box ATP-dependent RNA helicase 57 (540 aa).

Residues 24–73 (DFARFRQGPPAPDVASAAAPSPEKKRKRQSKAKAKKSKKRRAEGADSASD) form a disordered region. Basic residues predominate over residues 47-64 (KKRKRQSKAKAKKSKKRR). A coiled-coil region spans residues 101–129 (KSEDSEVVRRRKEVEREIERAAILRKKFD). Residues 146–174 (ELVSRYGCDSYLVGNLSKLGFQEPTPIQR) carry the Q motif motif. The 171-residue stretch at 177-347 (IPILLSGREC…RTIMHDAVRV (171 aa)) folds into the Helicase ATP-binding domain. 190–197 (APTGSGKT) is an ATP binding site. Residues 294 to 297 (DESD) carry the DEAD box motif. The Helicase C-terminal domain occupies 375–519 (ALRQSFAESL…EVPSWIKALP (145 aa)).

Belongs to the DEAD box helicase family. DDX52/ROK1 subfamily.

The enzyme catalyses ATP + H2O = ADP + phosphate + H(+). In Oryza sativa subsp. japonica (Rice), this protein is DEAD-box ATP-dependent RNA helicase 57.